We begin with the raw amino-acid sequence, 1870 residues long: Dedicator of cytokinesis protein 5 (1870 aa).

Residues 8 to 69 enclose the SH3 domain; sequence KRQKYGVAIY…PETYIHLKEA (62 aa). A Phosphoserine modification is found at Ser-365. Positions 443-627 constitute a C2 DOCK-type domain; that stretch reads RNDIYVTLIH…DSFQIATLIC (185 aa). Lys-818 is subject to N6-acetyllysine. One can recognise a DOCKER domain in the interval 1231-1642; it reads YKEKKREDIY…VEKHYGVITL (412 aa). A disordered region spans residues 1679–1702; that stretch reads VVSTSSNSSDNAPSRPGSDGSILE. Residues Ser-1756, Ser-1766, Ser-1785, and Ser-1789 each carry the phosphoserine modification. The tract at residues 1772–1870 is disordered; the sequence is NRLSPFHGSS…GIPTSEPGSQ (99 aa). Over residues 1784 to 1794 the composition is skewed to pro residues; that stretch reads QSTPLSPPPLT. At Thr-1794 the chain carries Phosphothreonine. Residues 1797–1808 are compositionally biased toward polar residues; sequence ATRTLSSPSLQT. Residue Thr-1814 is modified to Phosphothreonine. Pro residues predominate over residues 1815–1824; it reads PVPPPPPPKS. Ser-1834 and Ser-1869 each carry phosphoserine.

It belongs to the DOCK family. Interacts with CRK and CRKL. Interacts (via N-terminus) with tensin TNS3 (via N-terminus); the interaction increases DOCK5 guanine nucleotide exchange activity towards Rac. Interacts with ELMO1.

The protein resides in the cytoplasm. Its subcellular location is the cell membrane. It localises to the cell projection. The protein localises to the podosome. Guanine nucleotide exchange factor (GEF) for Rho and Rac. GEF proteins activate small GTPases by exchanging bound GDP for free GTP. Along with DOCK1, mediates CRK/CRKL regulation of epithelial and endothelial cell spreading and migration on type IV collagen. This is Dedicator of cytokinesis protein 5 (DOCK5) from Homo sapiens (Human).